We begin with the raw amino-acid sequence, 490 residues long: Betaine aldehyde dehydrogenase (490 aa).

Asn93 is a K(+) binding site. 150–152 (GAW) contacts NAD(+). Lys162 functions as the Charge relay system in the catalytic mechanism. Position 176–179 (176–179 (KPSE)) interacts with NAD(+). Val180 is a binding site for K(+). 230-233 (GTAT) contributes to the NAD(+) binding site. Leu246 provides a ligand contact to K(+). Residue Glu252 is the Proton acceptor of the active site. Positions 254, 286, and 387 each coordinate NAD(+). The Nucleophile role is filled by Cys286. At Cys286 the chain carries Cysteine sulfenic acid (-SOH). The K(+) site is built by Lys457 and Gly460. The Charge relay system role is filled by Glu464.

This sequence belongs to the aldehyde dehydrogenase family. As to quaternary structure, dimer of dimers. K(+) serves as cofactor.

The enzyme catalyses betaine aldehyde + NAD(+) + H2O = glycine betaine + NADH + 2 H(+). The protein operates within amine and polyamine biosynthesis; betaine biosynthesis via choline pathway; betaine from betaine aldehyde: step 1/1. Its function is as follows. Involved in the biosynthesis of the osmoprotectant glycine betaine. Catalyzes the irreversible oxidation of betaine aldehyde to the corresponding acid. This chain is Betaine aldehyde dehydrogenase, found in Xanthomonas campestris pv. campestris (strain ATCC 33913 / DSM 3586 / NCPPB 528 / LMG 568 / P 25).